The chain runs to 265 residues: 3-methyl-2-oxobutanoate hydroxymethyltransferase (265 aa).

Mg(2+) contacts are provided by Asp-43 and Asp-82. Residues 43-44, Asp-82, and Lys-111 contribute to the 3-methyl-2-oxobutanoate site; that span reads DS. Glu-113 contacts Mg(2+). Residue Glu-180 is the Proton acceptor of the active site.

Belongs to the PanB family. As to quaternary structure, homodecamer; pentamer of dimers. Mg(2+) serves as cofactor.

The protein resides in the cytoplasm. The enzyme catalyses 3-methyl-2-oxobutanoate + (6R)-5,10-methylene-5,6,7,8-tetrahydrofolate + H2O = 2-dehydropantoate + (6S)-5,6,7,8-tetrahydrofolate. Its pathway is cofactor biosynthesis; (R)-pantothenate biosynthesis; (R)-pantoate from 3-methyl-2-oxobutanoate: step 1/2. Its function is as follows. Catalyzes the reversible reaction in which hydroxymethyl group from 5,10-methylenetetrahydrofolate is transferred onto alpha-ketoisovalerate to form ketopantoate. This Francisella tularensis subsp. mediasiatica (strain FSC147) protein is 3-methyl-2-oxobutanoate hydroxymethyltransferase.